Here is a 361-residue protein sequence, read N- to C-terminus: Probable dual-specificity RNA methyltransferase RlmN (361 aa).

The active-site Proton acceptor is the glutamate 99. A Radical SAM core domain is found at 105–342; it reads GPNRMTACVS…VTIRKSYGTP (238 aa). Cysteine 112 and cysteine 347 are oxidised to a cystine. Residues cysteine 119, cysteine 123, and cysteine 126 each contribute to the [4Fe-4S] cluster site. Residues 171–172, serine 204, 227–229, and asparagine 304 each bind S-adenosyl-L-methionine; these read GE and SLH. Cysteine 347 functions as the S-methylcysteine intermediate in the catalytic mechanism.

It belongs to the radical SAM superfamily. RlmN family. [4Fe-4S] cluster is required as a cofactor.

The protein localises to the cytoplasm. The catalysed reaction is adenosine(2503) in 23S rRNA + 2 reduced [2Fe-2S]-[ferredoxin] + 2 S-adenosyl-L-methionine = 2-methyladenosine(2503) in 23S rRNA + 5'-deoxyadenosine + L-methionine + 2 oxidized [2Fe-2S]-[ferredoxin] + S-adenosyl-L-homocysteine. It catalyses the reaction adenosine(37) in tRNA + 2 reduced [2Fe-2S]-[ferredoxin] + 2 S-adenosyl-L-methionine = 2-methyladenosine(37) in tRNA + 5'-deoxyadenosine + L-methionine + 2 oxidized [2Fe-2S]-[ferredoxin] + S-adenosyl-L-homocysteine. Its function is as follows. Specifically methylates position 2 of adenine 2503 in 23S rRNA and position 2 of adenine 37 in tRNAs. The chain is Probable dual-specificity RNA methyltransferase RlmN from Chlorobium luteolum (strain DSM 273 / BCRC 81028 / 2530) (Pelodictyon luteolum).